We begin with the raw amino-acid sequence, 118 residues long: Secreted RxLR effector protein 143 (118 aa).

Positions 1–18 (MRHCAFLFRLFLIGYSCS) are cleaved as a signal peptide. Over residues 35–65 (DELPRAEQWDSDGKRILQADDPEHIPTEERG) the composition is skewed to basic and acidic residues. Residues 35–66 (DELPRAEQWDSDGKRILQADDPEHIPTEERGI) are disordered. The RxLR-dEER signature appears at 49–64 (RILQADDPEHIPTEER).

The protein belongs to the RxLR effector family.

The protein resides in the secreted. Its subcellular location is the host cell membrane. Its function is as follows. Secreted effector that completely suppresses the host cell death induced by cell death-inducing proteins. The sequence is that of Secreted RxLR effector protein 143 from Plasmopara viticola (Downy mildew of grapevine).